The sequence spans 151 residues: SsrA-binding protein (151 aa).

Belongs to the SmpB family.

It is found in the cytoplasm. Required for rescue of stalled ribosomes mediated by trans-translation. Binds to transfer-messenger RNA (tmRNA), required for stable association of tmRNA with ribosomes. tmRNA and SmpB together mimic tRNA shape, replacing the anticodon stem-loop with SmpB. tmRNA is encoded by the ssrA gene; the 2 termini fold to resemble tRNA(Ala) and it encodes a 'tag peptide', a short internal open reading frame. During trans-translation Ala-aminoacylated tmRNA acts like a tRNA, entering the A-site of stalled ribosomes, displacing the stalled mRNA. The ribosome then switches to translate the ORF on the tmRNA; the nascent peptide is terminated with the 'tag peptide' encoded by the tmRNA and targeted for degradation. The ribosome is freed to recommence translation, which seems to be the essential function of trans-translation. In Wolinella succinogenes (strain ATCC 29543 / DSM 1740 / CCUG 13145 / JCM 31913 / LMG 7466 / NCTC 11488 / FDC 602W) (Vibrio succinogenes), this protein is SsrA-binding protein.